The sequence spans 327 residues: Cytochrome f (327 aa).

The signal sequence occupies residues 1–24; that stretch reads MKRIYLALCALLLLLGTGSRPAAA. Tyrosine 25, cysteine 45, cysteine 48, and histidine 49 together coordinate heme. The chain crosses the membrane as a helical span at residues 293–313; the sequence is VKWLVAFLAAVAITQLLLVLK.

It belongs to the cytochrome f family. As to quaternary structure, the 4 large subunits of the cytochrome b6-f complex are cytochrome b6, subunit IV (17 kDa polypeptide, PetD), cytochrome f and the Rieske protein, while the 4 small subunits are PetG, PetL, PetM and PetN. The complex functions as a dimer. Requires heme as cofactor.

The protein localises to the cellular thylakoid membrane. In terms of biological role, component of the cytochrome b6-f complex, which mediates electron transfer between photosystem II (PSII) and photosystem I (PSI), cyclic electron flow around PSI, and state transitions. The chain is Cytochrome f from Synechococcus sp. (strain JA-3-3Ab) (Cyanobacteria bacterium Yellowstone A-Prime).